A 105-amino-acid polypeptide reads, in one-letter code: uncharacterized protein (105 aa).

The Helicase C-terminal domain occupies 2–42 (QVLIGTKLVTEGIDIKQLMMVIMLDNRLNIIELIQGVGRLR).

This sequence belongs to the helicase family. Yeast subtelomeric Y' repeat subfamily.

This is an uncharacterized protein from Saccharomyces cerevisiae (strain ATCC 204508 / S288c) (Baker's yeast).